Here is a 368-residue protein sequence, read N- to C-terminus: Zinc finger protein 24 (368 aa).

Residue K22 forms a Glycyl lysine isopeptide (Lys-Gly) (interchain with G-Cter in SUMO2) linkage. K27 is covalently cross-linked (Glycyl lysine isopeptide (Lys-Gly) (interchain with G-Cter in SUMO1); alternate). A Glycyl lysine isopeptide (Lys-Gly) (interchain with G-Cter in SUMO2); alternate cross-link involves residue K27. The region spanning 52–134 is the SCAN box domain; that stretch reads RQRFRQFGYQ…TVLEDLESEL (83 aa). Phosphoserine is present on residues S132 and S142. Glycyl lysine isopeptide (Lys-Gly) (interchain with G-Cter in SUMO2) cross-links involve residues K147, K177, and K236. The C2H2-type 1 zinc finger occupies 251–273; the sequence is HICDECGKHFSQGSALILHQRIH. The interval 251–301 is necessary and sufficient for nuclear localization; that stretch reads HICDECGKHFSQGSALILHQRIHSGEKPYGCVECGKAFSRSSILVQHQRVH. Phosphoserine is present on S274. Glycyl lysine isopeptide (Lys-Gly) (interchain with G-Cter in SUMO2) cross-links involve residues K277 and K286. 3 consecutive C2H2-type zinc fingers follow at residues 279 to 301, 307 to 329, and 335 to 357; these read YGCV…QRVH, YKCL…QRIH, and YECV…QRRH. S292 is subject to Phosphoserine. Y335 carries the phosphotyrosine modification. Glycyl lysine isopeptide (Lys-Gly) (interchain with G-Cter in SUMO2) cross-links involve residues K361 and K367.

The protein belongs to the krueppel C2H2-type zinc-finger protein family. Sumoylated.

The protein resides in the nucleus. Transcription factor required for myelination of differentiated oligodendrocytes. Required for the conversion of oligodendrocytes from the premyelinating to the myelinating state. In the developing central nervous system (CNS), involved in the maintenance in the progenitor stage by promoting the cell cycle. Specifically binds to the 5'-TCAT-3' DNA sequence. Has transcription repressor activity in vitro. In Rattus norvegicus (Rat), this protein is Zinc finger protein 24 (Znf24).